The primary structure comprises 669 residues: Phosphatidylinositol-3-phosphate phosphatase MTMR1 (669 aa).

Position 1 is an N-acetylmethionine (Met1). The span at 1 to 17 (MDRPVAAAAAASAASCE) shows a compositional bias: low complexity. The disordered stretch occupies residues 1 to 55 (MDRPVAAAAAASAASCEGAGGPGPGPGASWRPSRVAGGASASSRHPSIETLDSPT). Ser47 and Ser53 each carry phosphoserine. Residues 94–165 (NKLAQMEEAP…GVISRVEKIG (72 aa)) form the GRAM domain. Residues 230-605 (GWKVYDPVSE…SHLELWVNYY (376 aa)) form the Myotubularin phosphatase domain. Positions 355, 380, and 381 each coordinate a 1,2-diacyl-sn-glycero-3-phospho-(1D-myo-inositol-3-phosphate). Residue Cys442 is the Phosphocysteine intermediate of the active site. Residues Ser443, Asp444, Gly445, Trp446, Asp447, Arg448, and Arg488 each coordinate a 1,2-diacyl-sn-glycero-3-phospho-(1D-myo-inositol-3-phosphate). Ser443 provides a ligand contact to phosphate. The phosphate site is built by Gly445, Trp446, Asp447, and Arg448. Residues 612 to 669 (MRPQMPIHQNLKELLAIKAELQKRVEDLQREMATRTISSSSERGSSPTHSATPVHTSV) form a required for dimerization region. The tract at residues 644-669 (ATRTISSSSERGSSPTHSATPVHTSV) is disordered. The segment covering 649-661 (SSSSERGSSPTHS) has biased composition (low complexity).

This sequence belongs to the protein-tyrosine phosphatase family. Non-receptor class myotubularin subfamily. Homodimer. As to expression, widely expressed. Detected in skeletal muscle, heart, lung, liver and brain.

It is found in the cell membrane. The protein localises to the cytoplasm. It carries out the reaction a 1,2-diacyl-sn-glycero-3-phospho-(1D-myo-inositol-3-phosphate) + H2O = a 1,2-diacyl-sn-glycero-3-phospho-(1D-myo-inositol) + phosphate. The enzyme catalyses 1,2-dioctanoyl-sn-glycero-3-phospho-(1-D-myo-inositol-3-phosphate) + H2O = 1,2-dioctanoyl-sn-glycero-3-phospho-(1D-myo-inositol) + phosphate. It catalyses the reaction a 1,2-diacyl-sn-glycero-3-phospho-(1D-myo-inositol-3,5-bisphosphate) + H2O = a 1,2-diacyl-sn-glycero-3-phospho-(1D-myo-inositol-5-phosphate) + phosphate. Its function is as follows. Lipid phosphatase that specifically dephosphorylates the D-3 position of phosphatidylinositol 3-phosphate, generating phosphatidylinositol. Could also dephosphorylate phosphatidylinositol 3,5-bisphosphate to produce phosphatidylinositol 5-phosphate. This is Phosphatidylinositol-3-phosphate phosphatase MTMR1 from Mus musculus (Mouse).